Consider the following 583-residue polypeptide: Protein FMP25, mitochondrial (583 aa).

The N-terminal 25 residues, 1–25 (MSFRLFTRTSQRLPRLNWVSPIRRY), are a transit peptide targeting the mitochondrion. Residues 83-105 (AVGQGILILVVVGGLGTAYLRWP) form a helical membrane-spanning segment. RCC1 repeat units follow at residues 332 to 389 (KGQF…AIDK), 390 to 452 (TGEI…VTIR), 459 to 510 (DHHY…TETE), and 512 to 569 (ENEV…KEQR).

The protein resides in the mitochondrion membrane. The protein is Protein FMP25, mitochondrial (FMP25) of Saccharomyces cerevisiae (strain ATCC 204508 / S288c) (Baker's yeast).